The following is a 185-amino-acid chain: Ribosome-recycling factor (185 aa).

This sequence belongs to the RRF family.

The protein resides in the cytoplasm. Its function is as follows. Responsible for the release of ribosomes from messenger RNA at the termination of protein biosynthesis. May increase the efficiency of translation by recycling ribosomes from one round of translation to another. This Bacillus cytotoxicus (strain DSM 22905 / CIP 110041 / 391-98 / NVH 391-98) protein is Ribosome-recycling factor.